The primary structure comprises 1925 residues: Plexin-D1 (1925 aa).

Over residues 1–18 the composition is skewed to low complexity; it reads MAPRAAGGAPLSARAAAA. Positions 1–23 are disordered; sequence MAPRAAGGAPLSARAAAASPPPF. The signal sequence occupies residues 1–46; it reads MAPRAAGGAPLSARAAAASPPPFQTPPRCPVPLLLLLLLGAARAGA. Positions 47-546 constitute a Sema domain; the sequence is LEIQRRFPSP…TSHQMARVKV (500 aa). At 47–1271 the chain is on the extracellular side; it reads LEIQRRFPSP…TLQLGGSETA (1225 aa). Asn-86 carries an N-linked (GlcNAc...) asparagine glycan. Cystine bridges form between Cys-104/Cys-114 and Cys-140/Cys-148. N-linked (GlcNAc...) asparagine glycosylation is found at Asn-155, Asn-188, and Asn-224. Disulfide bonds link Cys-322-Cys-445 and Cys-345-Cys-389. Asn-481 and Asn-500 each carry an N-linked (GlcNAc...) asparagine glycan. 5 disulfide bridges follow: Cys-549/Cys-566, Cys-555/Cys-600, Cys-558/Cys-575, Cys-569/Cys-581, and Cys-637/Cys-661. Asn-583 carries an N-linked (GlcNAc...) asparagine glycan. Asn-696, Asn-736, Asn-802, Asn-965, Asn-1017, Asn-1060, Asn-1099, Asn-1118, Asn-1132, Asn-1237, and Asn-1257 each carry an N-linked (GlcNAc...) asparagine glycan. 3 IPT/TIG domains span residues 891-979, 981-1066, and 1069-1160; these read PEIH…FSYV, PLVH…FWYM, and PVIT…LDPE. Residues 1272–1292 form a helical membrane-spanning segment; sequence IIVSIVICSVLLLLSVVALFV. The Cytoplasmic portion of the chain corresponds to 1293–1925; sequence FCTKSRRAER…DNIYECYSEA (633 aa).

The protein belongs to the plexin family. In terms of assembly, interacts with NRP1 and SEMA4A. Interacts with SH3BP1; they dissociate upon SEMA3E binding to PLXND1 allowing SH3BP1 to transduce downstream signal through RAC1 inactivation. As to expression, detected at low levels in heart, placenta, lung, skeletal muscle, kidney, thymus and liver. Detected at very low levels in brain, colon, spleen, small intestine and peripheral blood leukocytes.

It localises to the cell membrane. Its subcellular location is the cell projection. It is found in the lamellipodium membrane. Functionally, cell surface receptor for SEMA4A and for class 3 semaphorins, such as SEMA3A, SEMA3C and SEMA3E. Plays an important role in cell-cell signaling, and in regulating the migration of a wide spectrum of cell types. Regulates the migration of thymocytes in the medulla. Regulates endothelial cell migration. Plays an important role in ensuring the specificity of synapse formation. Required for normal development of the heart and vasculature. Mediates anti-angiogenic signaling in response to SEMA3E. The chain is Plexin-D1 (PLXND1) from Homo sapiens (Human).